The primary structure comprises 148 residues: Aspartate carbamoyltransferase regulatory chain (148 aa).

Zn(2+)-binding residues include Cys-106, Cys-111, Cys-134, and Cys-137.

This sequence belongs to the PyrI family. As to quaternary structure, contains catalytic and regulatory chains. Zn(2+) is required as a cofactor.

Functionally, involved in allosteric regulation of aspartate carbamoyltransferase. The polypeptide is Aspartate carbamoyltransferase regulatory chain (Methanococcus maripaludis (strain DSM 14266 / JCM 13030 / NBRC 101832 / S2 / LL)).